Reading from the N-terminus, the 251-residue chain is 5-oxoprolinase subunit A (251 aa).

This sequence belongs to the LamB/PxpA family. Forms a complex composed of PxpA, PxpB and PxpC.

It carries out the reaction 5-oxo-L-proline + ATP + 2 H2O = L-glutamate + ADP + phosphate + H(+). Functionally, catalyzes the cleavage of 5-oxoproline to form L-glutamate coupled to the hydrolysis of ATP to ADP and inorganic phosphate. The chain is 5-oxoprolinase subunit A from Vibrio campbellii (strain ATCC BAA-1116).